We begin with the raw amino-acid sequence, 584 residues long: MITRMSELFLRTLRDDPADAEVPSHKLLIRAGYVRPVGPGLYTWLPLGLRVFRKIEQIVRDEMTAIGGQEILFPALLPRAPYETTNRWTEYGDTLFRLKDRRDNDYLLGPTHEELFTLTVKGEYSSYKDFPLILFQIQTKYRDEARPRAGILRGREFVMKDSYSFDVDDDGLKTAYHLHREAYQRIFARLGVHYVIVSAVSGAMGGSASEEFLAESEVGEDTFVRCLQSGYAANVEAVLTRVPEPLPIEGQPEAVVYDTPDAPTIATLVDWANGADLPNFAGRAVTAADTLKNVLVKVREPGGEWELLAVGVPGDREVDDKRLGAALEPAEYALLDEADFARHPFLVKGYVGPKALLDNGVRYLVDPRVVDGTAWITGADAPNKHVVGLVAGRDFVADGTIEAAEVRDGDPSPDGAGPLVSARGIEIGHIFQLGRKYTEAFSADVLGEDGKPVRLTMGSYGIGVSRLVAVIAEQQHDELGLRWPAAVAPFDVHVVIANKDDGARTGATELAGELDRLGLEVLLDDRKSSPGVKFKDAELLGVPWIVVVGRGWGDGVVELRDRFSGEKREIGVDDAATEILATVR.

Belongs to the class-II aminoacyl-tRNA synthetase family. ProS type 1 subfamily. As to quaternary structure, homodimer.

The protein resides in the cytoplasm. It catalyses the reaction tRNA(Pro) + L-proline + ATP = L-prolyl-tRNA(Pro) + AMP + diphosphate. Functionally, catalyzes the attachment of proline to tRNA(Pro) in a two-step reaction: proline is first activated by ATP to form Pro-AMP and then transferred to the acceptor end of tRNA(Pro). As ProRS can inadvertently accommodate and process non-cognate amino acids such as alanine and cysteine, to avoid such errors it has two additional distinct editing activities against alanine. One activity is designated as 'pretransfer' editing and involves the tRNA(Pro)-independent hydrolysis of activated Ala-AMP. The other activity is designated 'posttransfer' editing and involves deacylation of mischarged Ala-tRNA(Pro). The misacylated Cys-tRNA(Pro) is not edited by ProRS. This is Proline--tRNA ligase from Mycobacterium sp. (strain KMS).